The following is a 347-amino-acid chain: Fructose-1,6-bisphosphatase class 1 2 (347 aa).

Mg(2+) contacts are provided by glutamate 92, aspartate 111, leucine 113, and aspartate 114. Residues aspartate 114–serine 117 and asparagine 202 each bind substrate. Glutamate 274 is a Mg(2+) binding site.

The protein belongs to the FBPase class 1 family. As to quaternary structure, homotetramer. Mg(2+) serves as cofactor.

It is found in the cytoplasm. The catalysed reaction is beta-D-fructose 1,6-bisphosphate + H2O = beta-D-fructose 6-phosphate + phosphate. The protein operates within carbohydrate biosynthesis; Calvin cycle. The sequence is that of Fructose-1,6-bisphosphatase class 1 2 from Bradyrhizobium sp. (strain BTAi1 / ATCC BAA-1182).